The primary structure comprises 868 residues: Homeobox-leucine zipper protein HOX29 (868 aa).

Positions 9–72 (DASKYVRYTP…NRRCREKQRK (64 aa)) form a DNA-binding region, homeobox. Positions 64–106 (RRCREKQRKESSRLQALNRKLTAMNKLLMEENDRLQKQVSQLV) form a coiled coil. Residues 150–171 (VTSGHHHQQQQHNVVQPPPRDA) form a disordered region. The START domain maps to 169 to 397 (RDASPAGLMS…VAHEDTRSVI (229 aa)).

It belongs to the HD-ZIP homeobox family. Class III subfamily. Expressed in phloem.

The protein localises to the nucleus. Its function is as follows. Probable transcription factor that may be necessary for the proper patterning of vascular bundles. The sequence is that of Homeobox-leucine zipper protein HOX29 (HOX29) from Oryza sativa subsp. japonica (Rice).